The chain runs to 146 residues: Large ribosomal subunit protein uL15 (146 aa).

Basic and acidic residues predominate over residues 1–18 (MKLHELKPSEGSRKERNR). A disordered region spans residues 1 to 50 (MKLHELKPSEGSRKERNRVGRGTGSGNGKTSGRGHKGQKARSGGGVRLGF). The segment covering 21 to 31 (RGTGSGNGKTS) has biased composition (gly residues).

Belongs to the universal ribosomal protein uL15 family. As to quaternary structure, part of the 50S ribosomal subunit.

Its function is as follows. Binds to the 23S rRNA. The sequence is that of Large ribosomal subunit protein uL15 from Listeria innocua serovar 6a (strain ATCC BAA-680 / CLIP 11262).